We begin with the raw amino-acid sequence, 780 residues long: APC membrane recruitment protein 3 (780 aa).

A compositionally biased stretch (basic and acidic residues) spans 20 to 32; that stretch reads KLIDSPAKEDPDK. Disordered regions lie at residues 20-59, 341-407, 547-569, 582-617, 635-659, 706-729, and 749-780; these read KLID…QGYG, ELPL…FPRD, KGRE…AHSG, GEPA…TMTS, KELG…GSAL, KNPI…SPQD, and LGPQ…SVGS. Positions 354–376 are enriched in polar residues; that stretch reads SKASSIDTGTPKSEQPESVSTSD. Residues 602–617 show a composition bias toward polar residues; sequence QDFSEGQSSSEATMTS. Positions 753 to 763 are enriched in polar residues; sequence ACSSVDSQPQQ.

It belongs to the Amer family.

Its subcellular location is the cell membrane. In terms of biological role, regulator of the canonical Wnt signaling pathway. Acts by specifically binding phosphatidylinositol 4,5-bisphosphate (PtdIns(4,5)P2), translocating to the cell membrane. The polypeptide is APC membrane recruitment protein 3 (Amer3) (Mus musculus (Mouse)).